The primary structure comprises 853 residues: DNA mismatch repair protein MutS (853 aa).

ATP is bound at residue 614-621 (GPNMGGKS).

It belongs to the DNA mismatch repair MutS family.

Its function is as follows. This protein is involved in the repair of mismatches in DNA. It is possible that it carries out the mismatch recognition step. This protein has a weak ATPase activity. The chain is DNA mismatch repair protein MutS from Shigella boydii serotype 18 (strain CDC 3083-94 / BS512).